Reading from the N-terminus, the 324-residue chain is NAD(P)H-dependent D-xylose reductase XYR1 (324 aa).

The active-site Proton donor is tyrosine 50. Histidine 112 lines the substrate pocket. NAD(+) is bound by residues 168 to 169 (SN), 217 to 226 (SSFGPASFKE), and 273 to 283 (KSSREKTMKSN).

It belongs to the aldo/keto reductase family.

It carries out the reaction xylitol + NAD(+) = D-xylose + NADH + H(+). The enzyme catalyses xylitol + NADP(+) = D-xylose + NADPH + H(+). Its pathway is carbohydrate metabolism; D-xylose degradation. In terms of biological role, catalyzes the initial reaction in the xylose utilization pathway by reducing D-xylose into xylitol. Xylose is a major component of hemicelluloses such as xylan. Most fungi utilize D-xylose via three enzymatic reactions, xylose reductase (XR), xylitol dehydrogenase (XDH), and xylulokinase, to form xylulose 5-phosphate, which enters pentose phosphate pathway. This is NAD(P)H-dependent D-xylose reductase XYR1 (XYR1) from Pyricularia oryzae (strain 70-15 / ATCC MYA-4617 / FGSC 8958) (Rice blast fungus).